We begin with the raw amino-acid sequence, 312 residues long: Malate dehydrogenase (312 aa).

NAD(+) contacts are provided by residues 7–13 (GAAGGIG) and Asp-34. Substrate is bound by residues Arg-81 and Arg-87. Residues Asn-94 and 117–119 (ITN) contribute to the NAD(+) site. The substrate site is built by Asn-119 and Arg-153. His-177 acts as the Proton acceptor in catalysis. Met-227 lines the NAD(+) pocket.

This sequence belongs to the LDH/MDH superfamily. MDH type 1 family. As to quaternary structure, homodimer.

It catalyses the reaction (S)-malate + NAD(+) = oxaloacetate + NADH + H(+). Functionally, catalyzes the reversible oxidation of malate to oxaloacetate. The sequence is that of Malate dehydrogenase from Escherichia coli O139:H28 (strain E24377A / ETEC).